Reading from the N-terminus, the 177-residue chain is Large ribosomal subunit protein uL6 (177 aa).

This sequence belongs to the universal ribosomal protein uL6 family. In terms of assembly, part of the 50S ribosomal subunit.

Functionally, this protein binds to the 23S rRNA, and is important in its secondary structure. It is located near the subunit interface in the base of the L7/L12 stalk, and near the tRNA binding site of the peptidyltransferase center. The polypeptide is Large ribosomal subunit protein uL6 (Delftia acidovorans (strain DSM 14801 / SPH-1)).